The primary structure comprises 279 residues: Urease accessory protein UreD (279 aa).

This sequence belongs to the UreD family. As to quaternary structure, ureD, UreF and UreG form a complex that acts as a GTP-hydrolysis-dependent molecular chaperone, activating the urease apoprotein by helping to assemble the nickel containing metallocenter of UreC. The UreE protein probably delivers the nickel.

The protein localises to the cytoplasm. Required for maturation of urease via the functional incorporation of the urease nickel metallocenter. This Rhodopseudomonas palustris (strain ATCC BAA-98 / CGA009) protein is Urease accessory protein UreD.